The sequence spans 789 residues: MKFTLSWLKEHLETEASVQEIADTLTRIGHEVESVHNPADGLEAFRIARILTAERHPQADRLQILAVDVGESEPLQVVCGAANARAGLVGVFAAPGVYVPGIDVTLKIASIRGVESRGMMCSIRELGLGDEHEGILDLPHEAPVGQSYVEWAGLDDPVFDVAITPDRQDCMGVRGLARDLATAGIGRLKPLAIPRVPVTDAAPAEIAIEDKEGCPAFFGQLIHGIQNGPSPEWMARRLRAIGFRPTSALVDITNYIMFDLGRPLHVYDAGAIKGKLTARKAQNNEKIEALNGKSYDLDPSITVIADDQGVKNIAGIMGAEKASVSGSTTDVIIECAYFDPAAVSQAGQKLGLASDARIRFERGVDPAFLNEGLQIAARMVLDFCGGKATQAVTLGEAPSAVPVISYDPSYVTSLAAMDVAPARQREILEQLGFAIDAGWRVRVPSFRRDVSVVADIVADIVRIEGLDNVPSTALDRGDGVARPIATHGQLTERRVRRAAAAFGMNEAVTWSFISEKDANIFGGAFWKLANPISEDMKVMRPSLLPGLLTAAKRNRDRGQSTIRLFEVGRRYLQEAERPTLGLIFAGERMSRDWQYGKSQNFDAYDAKTAVSAMLDSVGMPVEKLQLLGDAGDVYHPGRSGRLCLGPKNTLAVFGEIHPAILAEFNMEGPVIGAEIFLDALPLRKNSGQLRQPYAPSMLQPVFRDFAFLLPKDVPAADLVRSIAGADKNAIVEARIFDVFTGETIDENEKSLGIEVMLQPAEKSFTDAELQGISDKIVAAAAKKGARLRA.

The tRNA-binding domain maps to 39 to 149 (ADGLEAFRIA…HEAPVGQSYV (111 aa)). Residues 399 to 471 (SAVPVISYDP…RIEGLDNVPS (73 aa)) form the B5 domain. Positions 449, 455, and 459 each coordinate Mg(2+). An FDX-ACB domain is found at 696–788 (SMLQPVFRDF…AAAKKGARLR (93 aa)).

It belongs to the phenylalanyl-tRNA synthetase beta subunit family. Type 1 subfamily. As to quaternary structure, tetramer of two alpha and two beta subunits. Mg(2+) serves as cofactor.

The protein resides in the cytoplasm. The catalysed reaction is tRNA(Phe) + L-phenylalanine + ATP = L-phenylalanyl-tRNA(Phe) + AMP + diphosphate + H(+). This is Phenylalanine--tRNA ligase beta subunit from Zymomonas mobilis subsp. mobilis (strain ATCC 31821 / ZM4 / CP4).